The sequence spans 116 residues: uncharacterized protein (116 aa).

The VOC domain occupies Glu5–Pro113. Lys76 is covalently cross-linked (Isoglutamyl lysine isopeptide (Lys-Gln) (interchain with Q-Cter in protein Pup)).

This is an uncharacterized protein from Mycolicibacterium smegmatis (strain ATCC 700084 / mc(2)155) (Mycobacterium smegmatis).